Reading from the N-terminus, the 72-residue chain is MKLSCGFLLILLVLSAMIATFSEVEAMKPSKPKCGLCRYRCCSGGCSSGKCVNGACDCSGRSDLNDELEKYQ.

Residues M1–S30 form the signal peptide. 4 disulfides stabilise this stretch: C34-C42, C37-C58, C41-C51, and C46-C56. Residues G60–Q72 constitute a propeptide that is removed on maturation.

The protein belongs to the short scorpion toxin superfamily. Potassium channel inhibitor family. Epsilon-KTx 01 subfamily. Expressed by the venom gland.

It localises to the secreted. Functionally, potassium channel blocker. At 3 uM, this toxin blocks voltage-independently voltage-gated potassium channels rKv1.2/KCNA2 (25%), hKv1.3/KCNA3 (27%), rKv4.2/KCND2 (25%), Kv10.1/KCNH1/EAG1 (15%), Kv11/hERG (12%), and Shaker-IR (10%). On hKv1.3/KCNA3, the IC(50) is 17.1 +-3.3 uM. In Tityus serrulatus (Brazilian scorpion), this protein is Potassium channel toxin epsilon-KTx 1.1.